We begin with the raw amino-acid sequence, 150 residues long: Probable histone H2A.5 (150 aa).

The span at 1-12 shows a compositional bias: low complexity; the sequence is MESSQATTKPTR. 2 disordered regions span residues 1–28 and 130–150; these read MESS…SVSK and KSTA…PKKA. A compositionally biased stretch (polar residues) spans 131-150; the sequence is STASSSQAEKASATKSPKKA. A Phosphoserine modification is found at Ser146. The SPKK motif motif lies at 146–149; the sequence is SPKK.

Belongs to the histone H2A family. The nucleosome is a histone octamer containing two molecules each of H2A, H2B, H3 and H4 assembled in one H3-H4 heterotetramer and two H2A-H2B heterodimers. The octamer wraps approximately 147 bp of DNA. In terms of processing, not ubiquitinated.

It localises to the nucleus. The protein localises to the chromosome. Its function is as follows. Core component of nucleosome. Nucleosomes wrap and compact DNA into chromatin, limiting DNA accessibility to the cellular machineries which require DNA as a template. Histones thereby play a central role in transcription regulation, DNA repair, DNA replication and chromosomal stability. DNA accessibility is regulated via a complex set of post-translational modifications of histones, also called histone code, and nucleosome remodeling. The chain is Probable histone H2A.5 from Arabidopsis thaliana (Mouse-ear cress).